The primary structure comprises 271 residues: ATP synthase subunit a (271 aa).

5 helical membrane-spanning segments follow: residues 31–51 (WDTILTSVIAGVIVVGLGLYM), 89–109 (FVAPMAVTLFVYILLCNWIGV), 124–144 (DINLTLTLALVVIVPMHIVSL), 186–206 (IFSGAIMVSLLALMPPYVLWL), and 216–236 (LGVGVIQAFIFALLTILYYAF). The segment at 247-271 (DEHADGGDSSSRQASPTPLPAGQVR) is disordered.

Belongs to the ATPase A chain family. As to quaternary structure, F-type ATPases have 2 components, CF(1) - the catalytic core - and CF(0) - the membrane proton channel. CF(1) has five subunits: alpha(3), beta(3), gamma(1), delta(1), epsilon(1). CF(0) has three main subunits: a(1), b(2) and c(9-12). The alpha and beta chains form an alternating ring which encloses part of the gamma chain. CF(1) is attached to CF(0) by a central stalk formed by the gamma and epsilon chains, while a peripheral stalk is formed by the delta and b chains.

It localises to the cell membrane. Its function is as follows. Key component of the proton channel; it plays a direct role in the translocation of protons across the membrane. This Acidothermus cellulolyticus (strain ATCC 43068 / DSM 8971 / 11B) protein is ATP synthase subunit a.